The sequence spans 156 residues: Transcriptional regulator MraZ (156 aa).

2 consecutive SpoVT-AbrB domains span residues T5–L51 and M80–A123.

Belongs to the MraZ family. As to quaternary structure, forms oligomers.

It is found in the cytoplasm. Its subcellular location is the nucleoid. The chain is Transcriptional regulator MraZ from Caulobacter vibrioides (strain ATCC 19089 / CIP 103742 / CB 15) (Caulobacter crescentus).